The following is a 347-amino-acid chain: RNA 3'-terminal phosphate cyclase (347 aa).

Residues glutamine 101 and 286-289 (HMAD) contribute to the ATP site. Residue histidine 312 is the Tele-AMP-histidine intermediate of the active site.

It belongs to the RNA 3'-terminal cyclase family. Type 1 subfamily.

Its subcellular location is the cytoplasm. The catalysed reaction is a 3'-end 3'-phospho-ribonucleotide-RNA + ATP = a 3'-end 2',3'-cyclophospho-ribonucleotide-RNA + AMP + diphosphate. In terms of biological role, catalyzes the conversion of 3'-phosphate to a 2',3'-cyclic phosphodiester at the end of RNA. The mechanism of action of the enzyme occurs in 3 steps: (A) adenylation of the enzyme by ATP; (B) transfer of adenylate to an RNA-N3'P to produce RNA-N3'PP5'A; (C) and attack of the adjacent 2'-hydroxyl on the 3'-phosphorus in the diester linkage to produce the cyclic end product. The biological role of this enzyme is unknown but it is likely to function in some aspects of cellular RNA processing. The protein is RNA 3'-terminal phosphate cyclase of Pyrobaculum neutrophilum (strain DSM 2338 / JCM 9278 / NBRC 100436 / V24Sta) (Thermoproteus neutrophilus).